A 146-amino-acid chain; its full sequence is Basic phospholipase A2 73 (146 aa).

Positions 1–19 are cleaved as a signal peptide; sequence MYPAHLLVLLAVCVSLLGA. The propeptide occupies 20–27; sequence ASIPPLPL. 7 cysteine pairs are disulfide-bonded: cysteine 38-cysteine 98, cysteine 54-cysteine 145, cysteine 56-cysteine 72, cysteine 71-cysteine 126, cysteine 78-cysteine 119, cysteine 87-cysteine 112, and cysteine 105-cysteine 117. Ca(2+)-binding residues include tyrosine 55, glycine 57, and glycine 59. Residue histidine 75 is part of the active site. Residue aspartate 76 coordinates Ca(2+). The active site involves aspartate 120.

The protein belongs to the phospholipase A2 family. Group I subfamily. D49 sub-subfamily. Requires Ca(2+) as cofactor. In terms of tissue distribution, expressed by the venom gland.

Its subcellular location is the secreted. The catalysed reaction is a 1,2-diacyl-sn-glycero-3-phosphocholine + H2O = a 1-acyl-sn-glycero-3-phosphocholine + a fatty acid + H(+). Functionally, snake venom phospholipase A2 (PLA2) that inhibits neuromuscular transmission by blocking acetylcholine release from the nerve termini. PLA2 catalyzes the calcium-dependent hydrolysis of the 2-acyl groups in 3-sn-phosphoglycerides. This chain is Basic phospholipase A2 73, found in Hydrophis hardwickii (Hardwick's spine-bellied seasnake).